We begin with the raw amino-acid sequence, 379 residues long: Probable pectin lyase A (379 aa).

The first 19 residues, 1–19 (MKFALLSGVAAGLLPVVSA), serve as a signal peptide directing secretion. Intrachain disulfides connect Cys-82–Cys-101 and Cys-91–Cys-225. The active site involves Arg-255. An intrachain disulfide couples Cys-322 to Cys-330.

It belongs to the polysaccharide lyase 1 family.

It localises to the secreted. The enzyme catalyses Eliminative cleavage of (1-&gt;4)-alpha-D-galacturonan methyl ester to give oligosaccharides with 4-deoxy-6-O-methyl-alpha-D-galact-4-enuronosyl groups at their non-reducing ends.. In terms of biological role, pectinolytic enzymes consist of four classes of enzymes: pectin lyase, polygalacturonase, pectin methylesterase and rhamnogalacturonase. Among pectinolytic enzymes, pectin lyase is the most important in depolymerization of pectin, since it cleaves internal glycosidic bonds of highly methylated pectins. In Aspergillus oryzae (strain ATCC 42149 / RIB 40) (Yellow koji mold), this protein is Probable pectin lyase A (pelA).